The primary structure comprises 177 residues: NADH-quinone oxidoreductase subunit B (177 aa).

Cys-56, Cys-57, Cys-121, and Cys-151 together coordinate [4Fe-4S] cluster.

The protein belongs to the complex I 20 kDa subunit family. NDH-1 is composed of 14 different subunits. Subunits NuoB, C, D, E, F, and G constitute the peripheral sector of the complex. The cofactor is [4Fe-4S] cluster.

It localises to the cell inner membrane. The catalysed reaction is a quinone + NADH + 5 H(+)(in) = a quinol + NAD(+) + 4 H(+)(out). In terms of biological role, NDH-1 shuttles electrons from NADH, via FMN and iron-sulfur (Fe-S) centers, to quinones in the respiratory chain. Couples the redox reaction to proton translocation (for every two electrons transferred, four hydrogen ions are translocated across the cytoplasmic membrane), and thus conserves the redox energy in a proton gradient. The polypeptide is NADH-quinone oxidoreductase subunit B (Roseobacter denitrificans (strain ATCC 33942 / OCh 114) (Erythrobacter sp. (strain OCh 114))).